Reading from the N-terminus, the 435-residue chain is E3 ubiquitin-protein ligase itt1 (435 aa).

Residues 16–135 enclose the RWD domain; the sequence is DELIALQSIY…EHVRSIATIA (120 aa). The interval 170 to 420 is TRIAD supradomain; sequence RKFQCNVCFD…DPVSSCYGML (251 aa). Positions 174, 177, 192, 194, 197, 200, 219, 224, 266, 271, 286, 289, 294, 297, 302, 308, 368, and 371 each coordinate Zn(2+). The RING-type 1 zinc-finger motif lies at 174 to 224; the sequence is CNVCFDEFNGTDCFQLTRCGHVSCQSCLRDYYTMCIQEGMFSQIKCIDLDC. An IBR-type zinc finger spans residues 245-308; sequence TNRYKELEEK…ATWHGDLSPC (64 aa). The segment at 368–396 adopts an RING-type 2; atypical zinc-finger fold; it reads CPTCDRVVERIDGCCHMNCLCGTHFCFLC. Residue cysteine 381 is part of the active site. Zn(2+) is bound by residues cysteine 386, cysteine 388, cysteine 393, cysteine 396, histidine 408, and cysteine 416.

Belongs to the RBR family. RNF14 subfamily.

The protein localises to the cytoplasm. The protein resides in the nucleus. It carries out the reaction [E2 ubiquitin-conjugating enzyme]-S-ubiquitinyl-L-cysteine + [acceptor protein]-L-lysine = [E2 ubiquitin-conjugating enzyme]-L-cysteine + [acceptor protein]-N(6)-ubiquitinyl-L-lysine.. The protein operates within protein modification; protein ubiquitination. E3 ubiquitin-protein ligase involved in the rescue of stalled ribosomes by promoting ubiquitination and degradation of proteins on stalled ribosomes. Specifically required to resolve RNA-protein cross-links caused by reactive aldehydes, which trigger translation stress by stalling ribosomes: acts by catalying 'Lys-6'-linked ubiquitination of RNA-protein cross-links, leading to their degradation. The polypeptide is E3 ubiquitin-protein ligase itt1 (itt1) (Schizosaccharomyces pombe (strain 972 / ATCC 24843) (Fission yeast)).